A 320-amino-acid chain; its full sequence is Glyoxylate/hydroxypyruvate reductase B (320 aa).

Catalysis depends on residues arginine 233 and glutamate 262. The Proton donor role is filled by histidine 281.

The protein belongs to the D-isomer specific 2-hydroxyacid dehydrogenase family. GhrB subfamily. As to quaternary structure, homodimer.

The protein localises to the cytoplasm. The enzyme catalyses glycolate + NADP(+) = glyoxylate + NADPH + H(+). It catalyses the reaction (R)-glycerate + NAD(+) = 3-hydroxypyruvate + NADH + H(+). The catalysed reaction is (R)-glycerate + NADP(+) = 3-hydroxypyruvate + NADPH + H(+). Functionally, catalyzes the NADPH-dependent reduction of glyoxylate and hydroxypyruvate into glycolate and glycerate, respectively. This Pectobacterium carotovorum subsp. carotovorum (strain PC1) protein is Glyoxylate/hydroxypyruvate reductase B.